The primary structure comprises 172 residues: Translationally-controlled tumor protein homolog (172 aa).

The TCTP domain occupies 1-172 (MIIYRDCISQ…FKDGLEIEKC (172 aa)). Position 46 is a phosphoserine; by PLK1 (S46).

It belongs to the TCTP family.

The protein localises to the cytoplasm. Involved in calcium binding and microtubule stabilization. The polypeptide is Translationally-controlled tumor protein homolog (TPT1) (Gallus gallus (Chicken)).